Consider the following 386-residue polypeptide: DNA-directed RNA polymerase subunit Rpo1C (386 aa).

Belongs to the RNA polymerase beta' chain family. In terms of assembly, part of the RNA polymerase complex.

The protein resides in the cytoplasm. The catalysed reaction is RNA(n) + a ribonucleoside 5'-triphosphate = RNA(n+1) + diphosphate. DNA-dependent RNA polymerase (RNAP) catalyzes the transcription of DNA into RNA using the four ribonucleoside triphosphates as substrates. Forms part of the jaw domain. The chain is DNA-directed RNA polymerase subunit Rpo1C from Methanococcus maripaludis (strain DSM 14266 / JCM 13030 / NBRC 101832 / S2 / LL).